The sequence spans 1254 residues: Ubiquitin carboxyl-terminal hydrolase 12 (1254 aa).

S84 carries the post-translational modification Phosphoserine. The region spanning 97 to 199 (NVLEQQRDVV…GSYPVVTNLV (103 aa)) is the DUSP domain. The USP domain occupies 364-1110 (TGLVNLGNTC…SAYLLFYIRR (747 aa)). C373 functions as the Nucleophile in the catalytic mechanism. The interval 827–893 (DEGDTEGSEA…EPELTDKPEA (67 aa)) is disordered. Positions 854-864 (TVTNNENVNNT) are enriched in low complexity. Over residues 867–883 (RDEDMELTDDVEEDAST) the composition is skewed to acidic residues. The active-site Proton acceptor is H1068. Phosphoserine is present on S1160. Residues 1188-1207 (QDCNDEDDNDDGERTNSGRR) are disordered. Residues 1189–1198 (DCNDEDDNDD) are compositionally biased toward acidic residues.

Belongs to the peptidase C19 family. As to quaternary structure, interacts with FZO1.

It catalyses the reaction Thiol-dependent hydrolysis of ester, thioester, amide, peptide and isopeptide bonds formed by the C-terminal Gly of ubiquitin (a 76-residue protein attached to proteins as an intracellular targeting signal).. In terms of biological role, ubiquitin carboxyl-terminal hydrolase that recognizes ubiquitin chains that stabilize FZO1 and promote mitochondrial fusion. UBP12 deubiquitylates FZO1 only after oligomerization. In Saccharomyces cerevisiae (strain ATCC 204508 / S288c) (Baker's yeast), this protein is Ubiquitin carboxyl-terminal hydrolase 12 (UBP12).